A 1436-amino-acid chain; its full sequence is DNA-directed RNA polymerase subunit beta' (1436 aa).

Residues C70, C72, C85, and C88 each coordinate Zn(2+). D481, D483, and D485 together coordinate Mg(2+). Zn(2+) contacts are provided by C829, C903, C910, and C913.

It belongs to the RNA polymerase beta' chain family. In terms of assembly, the RNAP catalytic core consists of 2 alpha, 1 beta, 1 beta' and 1 omega subunit. When a sigma factor is associated with the core the holoenzyme is formed, which can initiate transcription. The cofactor is Mg(2+). Zn(2+) is required as a cofactor.

It carries out the reaction RNA(n) + a ribonucleoside 5'-triphosphate = RNA(n+1) + diphosphate. Functionally, DNA-dependent RNA polymerase catalyzes the transcription of DNA into RNA using the four ribonucleoside triphosphates as substrates. This is DNA-directed RNA polymerase subunit beta' from Flavobacterium johnsoniae (strain ATCC 17061 / DSM 2064 / JCM 8514 / BCRC 14874 / CCUG 350202 / NBRC 14942 / NCIMB 11054 / UW101) (Cytophaga johnsonae).